Here is a 300-residue protein sequence, read N- to C-terminus: UDP-N-acetylenolpyruvoylglucosamine reductase (300 aa).

The region spanning 30-194 is the FAD-binding PCMH-type domain; the sequence is RVGGPADFFV…IGATFVLDSD (165 aa). Residue Arg-174 is part of the active site. The active-site Proton donor is the Ser-223. Glu-293 is a catalytic residue.

It belongs to the MurB family. FAD is required as a cofactor.

Its subcellular location is the cytoplasm. It catalyses the reaction UDP-N-acetyl-alpha-D-muramate + NADP(+) = UDP-N-acetyl-3-O-(1-carboxyvinyl)-alpha-D-glucosamine + NADPH + H(+). It participates in cell wall biogenesis; peptidoglycan biosynthesis. Its function is as follows. Cell wall formation. The chain is UDP-N-acetylenolpyruvoylglucosamine reductase from Geobacter sulfurreducens (strain ATCC 51573 / DSM 12127 / PCA).